The primary structure comprises 97 residues: Exodeoxyribonuclease 7 small subunit (97 aa).

The interval 1-21 (MAKTATPGACASDPGSGPLPE) is disordered.

This sequence belongs to the XseB family. As to quaternary structure, heterooligomer composed of large and small subunits.

Its subcellular location is the cytoplasm. The enzyme catalyses Exonucleolytic cleavage in either 5'- to 3'- or 3'- to 5'-direction to yield nucleoside 5'-phosphates.. Functionally, bidirectionally degrades single-stranded DNA into large acid-insoluble oligonucleotides, which are then degraded further into small acid-soluble oligonucleotides. The polypeptide is Exodeoxyribonuclease 7 small subunit (Burkholderia mallei (strain NCTC 10247)).